The following is a 435-amino-acid chain: Eukaryotic translation initiation factor 3 subunit E (435 aa).

Residues 219–392 (FFNHAKGRDL…GHVVMGTQPL (174 aa)) enclose the PCI domain.

It belongs to the eIF-3 subunit E family. In terms of assembly, component of the eukaryotic translation initiation factor 3 (eIF-3) complex.

The protein resides in the cytoplasm. In terms of biological role, component of the eukaryotic translation initiation factor 3 (eIF-3) complex, which is involved in protein synthesis of a specialized repertoire of mRNAs and, together with other initiation factors, stimulates binding of mRNA and methionyl-tRNAi to the 40S ribosome. The eIF-3 complex specifically targets and initiates translation of a subset of mRNAs involved in cell proliferation. The polypeptide is Eukaryotic translation initiation factor 3 subunit E (eIF3-S6) (Culex quinquefasciatus (Southern house mosquito)).